A 43-amino-acid chain; its full sequence is Protein PsbN (43 aa).

A helical membrane pass occupies residues 5–27 (TLVAISISGLLVSFTGYALYTAF).

Belongs to the PsbN family.

The protein resides in the plastid. Its subcellular location is the chloroplast thylakoid membrane. In terms of biological role, may play a role in photosystem I and II biogenesis. This Houttuynia cordata (Chameleon plant) protein is Protein PsbN.